The chain runs to 355 residues: tRNA N6-adenosine threonylcarbamoyltransferase (355 aa).

His111 and His115 together coordinate Fe cation. Substrate is bound by residues 134–138, Asp167, Gly180, Asp184, and Asn279; that span reads LVSGG. Asp307 is a binding site for Fe cation.

The protein belongs to the KAE1 / TsaD family. The cofactor is Fe(2+).

The protein localises to the cytoplasm. It carries out the reaction L-threonylcarbamoyladenylate + adenosine(37) in tRNA = N(6)-L-threonylcarbamoyladenosine(37) in tRNA + AMP + H(+). Required for the formation of a threonylcarbamoyl group on adenosine at position 37 (t(6)A37) in tRNAs that read codons beginning with adenine. Is involved in the transfer of the threonylcarbamoyl moiety of threonylcarbamoyl-AMP (TC-AMP) to the N6 group of A37, together with TsaE and TsaB. TsaD likely plays a direct catalytic role in this reaction. The polypeptide is tRNA N6-adenosine threonylcarbamoyltransferase (Picosynechococcus sp. (strain ATCC 27264 / PCC 7002 / PR-6) (Agmenellum quadruplicatum)).